Consider the following 87-residue polypeptide: Protein Isd11 (87 aa).

It belongs to the complex I LYR family. In terms of assembly, interacts with IscS; the interaction enhances cysteine desulfurase activity of IscS. Component of a complex, at least composed of IscS, Isd11 and IscU.

It is found in the mitochondrion. Its pathway is cofactor biosynthesis; iron-sulfur cluster biosynthesis. In terms of biological role, participates in iron-sulfur cluster formation (ISC) pathway for iron-sulfur (Fe-S) cluster biogenesis. Enhances cysteine desulfurase activity of IscS. This is Protein Isd11 from Plasmodium falciparum (isolate 3D7).